The following is a 612-amino-acid chain: FAD-linked oxidoreductase easE (612 aa).

The FAD-binding PCMH-type domain maps to 129–313 (HQGRIPLYSA…TRATMRVFPD (185 aa)).

It belongs to the oxygen-dependent FAD-linked oxidoreductase family. The cofactor is FAD.

The protein operates within alkaloid biosynthesis; ergot alkaloid biosynthesis. Its function is as follows. FAD-linked oxidoreductase; part of the gene cluster that mediates the biosynthesis of fungal ergot alkaloid. DmaW catalyzes the first step of ergot alkaloid biosynthesis by condensing dimethylallyl diphosphate (DMAP) and tryptophan to form 4-dimethylallyl-L-tryptophan. The second step is catalyzed by the methyltransferase easF that methylates 4-dimethylallyl-L-tryptophan in the presence of S-adenosyl-L-methionine, resulting in the formation of 4-dimethylallyl-L-abrine. The catalase easC and the FAD-dependent oxidoreductase easE then transform 4-dimethylallyl-L-abrine to chanoclavine-I which is further oxidized by easD in the presence of NAD(+), resulting in the formation of chanoclavine-I aldehyde. Chanoclavine-I aldehyde is the precursor of ergoamides and ergopeptines in Clavicipitaceae, and clavine-type alcaloids such as fumiclavine in Trichocomaceae. However, the metabolites downstream of chanoclavine-I aldehyde in Arthrodermataceae have not been identified yet. This chain is FAD-linked oxidoreductase easE, found in Arthroderma otae (strain ATCC MYA-4605 / CBS 113480) (Microsporum canis).